Reading from the N-terminus, the 251-residue chain is Hydroxyacylglutathione hydrolase (251 aa).

H53, H55, D57, H58, H110, D127, and H165 together coordinate Zn(2+).

Belongs to the metallo-beta-lactamase superfamily. Glyoxalase II family. As to quaternary structure, monomer. Zn(2+) is required as a cofactor.

The catalysed reaction is an S-(2-hydroxyacyl)glutathione + H2O = a 2-hydroxy carboxylate + glutathione + H(+). It participates in secondary metabolite metabolism; methylglyoxal degradation; (R)-lactate from methylglyoxal: step 2/2. Functionally, thiolesterase that catalyzes the hydrolysis of S-D-lactoyl-glutathione to form glutathione and D-lactic acid. The chain is Hydroxyacylglutathione hydrolase from Salmonella arizonae (strain ATCC BAA-731 / CDC346-86 / RSK2980).